Here is a 344-residue protein sequence, read N- to C-terminus: sn-glycerol-3-phosphate import ATP-binding protein UgpC 2 (344 aa).

Positions 4–234 constitute an ABC transporter domain; that stretch reads IELIDLKKNY…PETVFVAGFI (231 aa). ATP is bound at residue 36–43; that stretch reads GPSGCGKS.

The protein belongs to the ABC transporter superfamily. sn-glycerol-3-phosphate importer (TC 3.A.1.1.3) family. In terms of assembly, the complex is composed of two ATP-binding proteins (UgpC), two transmembrane proteins (UgpA and UgpE) and a solute-binding protein (UgpB).

The protein localises to the cell inner membrane. The catalysed reaction is sn-glycerol 3-phosphate(out) + ATP + H2O = sn-glycerol 3-phosphate(in) + ADP + phosphate + H(+). Part of the ABC transporter complex UgpBAEC involved in sn-glycerol-3-phosphate (G3P) import. Responsible for energy coupling to the transport system. The polypeptide is sn-glycerol-3-phosphate import ATP-binding protein UgpC 2 (Rhizobium johnstonii (strain DSM 114642 / LMG 32736 / 3841) (Rhizobium leguminosarum bv. viciae)).